The sequence spans 307 residues: D-alanine--D-alanine ligase (307 aa).

In terms of domain architecture, ATP-grasp spans 101-301 (RDVLAAAGVP…FGELVRWMVD (201 aa)). 128 to 182 (LPPPYVIKPLGEGSSFGVFIVREDQAYPPQELTRSDWAFGNRVLVESYIGGRELT) serves as a coordination point for ATP. The Mg(2+) site is built by Asp251, Glu268, and Asn270.

Belongs to the D-alanine--D-alanine ligase family. Requires Mg(2+) as cofactor. It depends on Mn(2+) as a cofactor.

The protein localises to the cytoplasm. The catalysed reaction is 2 D-alanine + ATP = D-alanyl-D-alanine + ADP + phosphate + H(+). It participates in cell wall biogenesis; peptidoglycan biosynthesis. Functionally, cell wall formation. The chain is D-alanine--D-alanine ligase from Beijerinckia indica subsp. indica (strain ATCC 9039 / DSM 1715 / NCIMB 8712).